Reading from the N-terminus, the 186-residue chain is TATA-box-binding protein E (186 aa).

A run of 2 repeats spans residues 10-86 (IENV…FDKL) and 101-179 (VQNI…TSRL).

This sequence belongs to the TBP family.

Its function is as follows. General factor that plays a role in the activation of archaeal genes transcribed by RNA polymerase. Binds specifically to the TATA box promoter element which lies close to the position of transcription initiation. The protein is TATA-box-binding protein E (tbpE) of Halobacterium salinarum (strain ATCC 700922 / JCM 11081 / NRC-1) (Halobacterium halobium).